A 199-amino-acid chain; its full sequence is Achaete-scute homolog 1 (199 aa).

A disordered region spans residues Pro37 to Ser56. A bHLH domain is found at Ala81–Leu133. The segment covering His162–Glu179 has biased composition (polar residues). The segment at His162–Glu189 is disordered.

As to quaternary structure, efficient DNA binding requires dimerization with another bHLH protein. As to expression, neuronal precursor cells.

The protein resides in the nucleus. Transcription factor that plays a key role in neuronal differentiation: acts as a pioneer transcription factor, accessing closed chromatin to allow other factors to bind and activate neural pathways. Directly binds the E box motif (5'-CANNTG-3') on promoters and promotes transcription of neuronal genes. The combination of three transcription factors, ASCL1, POU3F2/BRN2 and MYT1L, is sufficient to reprogram fibroblasts and other somatic cells into induced neuronal (iN) cells in vitro. This Xenopus laevis (African clawed frog) protein is Achaete-scute homolog 1 (ascl1).